Reading from the N-terminus, the 547-residue chain is MTKTDPAPMAPPPRGEEEEEEEEDEPVPEAPSPTQERRQKPVVHPSAPAPLPKDYAFTFFDPNDPACQEILFDPQTTIPELFAIVRQWVPQVQHKIDVIGNEILRRGCHVNDRDGLTDMTLLHYACKAGAHGVGDPAAAVRLSQQLLALGADVTLRSRWTNMNALHYAAYFDVPDLVRVLLKGARPRVVNSTCSDFNHGSALHIAASSLCLGAAKCLLEHGANPALRNRKGQVPAEVVPDPMDMSLDKAEAALVAKELRTLLEEAVPLSCALPKVTLPNYDNVPGNLMLSALGLRLGDRVLLDGQKTGTLRFCGTTEFASGQWVGVELDEPEGKNDGSVGGVRYFICPPKQGLFASVSKISKAVDAPPSSVTSTPRTPRMDFSRVTGKGRREHKGKKKTPSSPSLGSLQQRDRAKAEVGDQVLVAGQKQGIVRFYGKTDFAPGYWYGIELDQPTGKHDGSVFGVRYFTCPPRHGVFAPASRIQRIGGSTDSPGDSVGAKKVHQVTMTQPKRTFTTVRTPKDIASENSISRLLFCCWFPWMLRAEMQS.

Residues M1–A49 form a disordered region. The span at E16–V27 shows a compositional bias: acidic residues. ANK repeat units lie at residues T117 to L155, T160 to V189, and N197 to L226. The 43-residue stretch at G314 to S356 folds into the CAP-Gly 1 domain. Residues D365–R413 form a disordered region. Residues P367–T377 show a composition bias toward low complexity. Phosphothreonine is present on T374. Positions G387–T399 are enriched in basic residues. The span at P400–Q409 shows a compositional bias: polar residues. A Phosphoserine modification is found at S401. Residues G436–P478 enclose the CAP-Gly 2 domain. Residues S488–S547 are goLD. Residues C534 and C535 are each lipidated (S-palmitoyl cysteine).

In terms of assembly, homodimer. Interacts with AKT1 and AKT2; when AKT1 and AKT2 are phosphorylated and activated, affinity is higher for AKT2. Interacts with ZDHHC13 (via ANK repeats). Interacts with ZDHHC17 (via ANK repeats). Post-translationally, palmitoylation by ZDHHC17 regulates association with the plasma membrane.

It localises to the cell membrane. The protein localises to the cytoplasm. The protein resides in the golgi apparatus. Its subcellular location is the golgi stack. Functionally, functions as a cytoplasmic linker protein. Involved in TGN-endosome dynamics. May modulate the cellular compartmentalization of AKT kinase family and promote its cell membrane localization, thereby playing a role in glucose transport in adipocytes. This is CAP-Gly domain-containing linker protein 3 (CLIP3) from Pongo abelii (Sumatran orangutan).